We begin with the raw amino-acid sequence, 548 residues long: Lysine--tRNA ligase (548 aa).

The short motif at 43-51 (PSGVPHLGN) is the 'HIGH' region element. Positions 308–312 (PFSSS) match the 'KMSKS' region motif.

This sequence belongs to the class-I aminoacyl-tRNA synthetase family.

It is found in the cytoplasm. It catalyses the reaction tRNA(Lys) + L-lysine + ATP = L-lysyl-tRNA(Lys) + AMP + diphosphate. In Halobacterium salinarum (strain ATCC 700922 / JCM 11081 / NRC-1) (Halobacterium halobium), this protein is Lysine--tRNA ligase.